A 626-amino-acid chain; its full sequence is Chaperone protein HtpG (626 aa).

Residues 1–339 (MSQNQETRGF…SNDLPLNVSR (339 aa)) form an a; substrate-binding region. The segment at 340–555 (EILQDNKITA…NDQMTTQMAK (216 aa)) is b. The interval 556–626 (LFAAAGQPVP…FIKRINKLLG (71 aa)) is c.

The protein belongs to the heat shock protein 90 family. As to quaternary structure, homodimer.

The protein resides in the cytoplasm. In terms of biological role, molecular chaperone. Has ATPase activity. This is Chaperone protein HtpG from Haemophilus influenzae (strain 86-028NP).